A 68-amino-acid chain; its full sequence is Protein SlyX homolog (68 aa).

It belongs to the SlyX family.

This Brucella anthropi (strain ATCC 49188 / DSM 6882 / CCUG 24695 / JCM 21032 / LMG 3331 / NBRC 15819 / NCTC 12168 / Alc 37) (Ochrobactrum anthropi) protein is Protein SlyX homolog.